Here is a 407-residue protein sequence, read N- to C-terminus: Carbamoyl phosphate synthase small chain (407 aa).

A CPSase region spans residues 1 to 205; it reads MTETTSKTAP…LADGYGEQDT (205 aa). 3 residues coordinate L-glutamine: S60, G257, and G259. The 189-residue stretch at 209–397 folds into the Glutamine amidotransferase type-1 domain; sequence HVVALDFGVK…INLIREKKGE (189 aa). Catalysis depends on C286, which acts as the Nucleophile. Residues L287, Q290, N328, G330, and F331 each coordinate L-glutamine. Residues H370 and E372 contribute to the active site.

Belongs to the CarA family. Composed of two chains; the small (or glutamine) chain promotes the hydrolysis of glutamine to ammonia, which is used by the large (or ammonia) chain to synthesize carbamoyl phosphate. Tetramer of heterodimers (alpha,beta)4.

It catalyses the reaction hydrogencarbonate + L-glutamine + 2 ATP + H2O = carbamoyl phosphate + L-glutamate + 2 ADP + phosphate + 2 H(+). The catalysed reaction is L-glutamine + H2O = L-glutamate + NH4(+). It participates in amino-acid biosynthesis; L-arginine biosynthesis; carbamoyl phosphate from bicarbonate: step 1/1. It functions in the pathway pyrimidine metabolism; UMP biosynthesis via de novo pathway; (S)-dihydroorotate from bicarbonate: step 1/3. Functionally, small subunit of the glutamine-dependent carbamoyl phosphate synthetase (CPSase). CPSase catalyzes the formation of carbamoyl phosphate from the ammonia moiety of glutamine, carbonate, and phosphate donated by ATP, constituting the first step of 2 biosynthetic pathways, one leading to arginine and/or urea and the other to pyrimidine nucleotides. The small subunit (glutamine amidotransferase) binds and cleaves glutamine to supply the large subunit with the substrate ammonia. This chain is Carbamoyl phosphate synthase small chain, found in Brucella anthropi (strain ATCC 49188 / DSM 6882 / CCUG 24695 / JCM 21032 / LMG 3331 / NBRC 15819 / NCTC 12168 / Alc 37) (Ochrobactrum anthropi).